Consider the following 258-residue polypeptide: Small ribosomal subunit protein uS2 (258 aa).

Positions 226–258 (AQNKDVEPVADKDEKPEAAPVDEAETATETTGE) are disordered. Residues 229–242 (KDVEPVADKDEKPE) are compositionally biased toward basic and acidic residues. Residues 245 to 258 (PVDEAETATETTGE) show a composition bias toward acidic residues.

Belongs to the universal ribosomal protein uS2 family.

The sequence is that of Small ribosomal subunit protein uS2 from Solidesulfovibrio magneticus (strain ATCC 700980 / DSM 13731 / RS-1) (Desulfovibrio magneticus).